The chain runs to 210 residues: N-(5'-phosphoribosyl)anthranilate isomerase (210 aa).

The protein belongs to the TrpF family.

It catalyses the reaction N-(5-phospho-beta-D-ribosyl)anthranilate = 1-(2-carboxyphenylamino)-1-deoxy-D-ribulose 5-phosphate. It participates in amino-acid biosynthesis; L-tryptophan biosynthesis; L-tryptophan from chorismate: step 3/5. The chain is N-(5'-phosphoribosyl)anthranilate isomerase from Pseudomonas fluorescens (strain ATCC BAA-477 / NRRL B-23932 / Pf-5).